A 342-amino-acid polypeptide reads, in one-letter code: GTPase Obg (342 aa).

An Obg domain is found at M1–I159. Positions A160–D327 constitute an OBG-type G domain. Residues G166–S173, F191–V195, D212–G215, N279–D282, and S308–V310 each bind GTP. S173 and T193 together coordinate Mg(2+).

The protein belongs to the TRAFAC class OBG-HflX-like GTPase superfamily. OBG GTPase family. As to quaternary structure, monomer. The cofactor is Mg(2+).

The protein localises to the cytoplasm. Its function is as follows. An essential GTPase which binds GTP, GDP and possibly (p)ppGpp with moderate affinity, with high nucleotide exchange rates and a fairly low GTP hydrolysis rate. Plays a role in control of the cell cycle, stress response, ribosome biogenesis and in those bacteria that undergo differentiation, in morphogenesis control. This Cereibacter sphaeroides (strain KD131 / KCTC 12085) (Rhodobacter sphaeroides) protein is GTPase Obg.